The following is a 298-amino-acid chain: 4-hydroxy-3-methylbut-2-enyl diphosphate reductase (298 aa).

Cys-12 serves as a coordination point for [4Fe-4S] cluster. The (2E)-4-hydroxy-3-methylbut-2-enyl diphosphate site is built by His-40 and His-78. Dimethylallyl diphosphate contacts are provided by His-40 and His-78. The isopentenyl diphosphate site is built by His-40 and His-78. Cys-100 contacts [4Fe-4S] cluster. His-128 is a binding site for (2E)-4-hydroxy-3-methylbut-2-enyl diphosphate. Residue His-128 coordinates dimethylallyl diphosphate. His-128 is an isopentenyl diphosphate binding site. The Proton donor role is filled by Glu-130. Thr-171 is a binding site for (2E)-4-hydroxy-3-methylbut-2-enyl diphosphate. A [4Fe-4S] cluster-binding site is contributed by Cys-200. Positions 228, 229, 230, and 270 each coordinate (2E)-4-hydroxy-3-methylbut-2-enyl diphosphate. Residues Ser-228, Ser-229, Asn-230, and Ser-270 each coordinate dimethylallyl diphosphate. The isopentenyl diphosphate site is built by Ser-228, Ser-229, Asn-230, and Ser-270.

It belongs to the IspH family. Requires [4Fe-4S] cluster as cofactor.

It carries out the reaction isopentenyl diphosphate + 2 oxidized [2Fe-2S]-[ferredoxin] + H2O = (2E)-4-hydroxy-3-methylbut-2-enyl diphosphate + 2 reduced [2Fe-2S]-[ferredoxin] + 2 H(+). It catalyses the reaction dimethylallyl diphosphate + 2 oxidized [2Fe-2S]-[ferredoxin] + H2O = (2E)-4-hydroxy-3-methylbut-2-enyl diphosphate + 2 reduced [2Fe-2S]-[ferredoxin] + 2 H(+). It participates in isoprenoid biosynthesis; dimethylallyl diphosphate biosynthesis; dimethylallyl diphosphate from (2E)-4-hydroxy-3-methylbutenyl diphosphate: step 1/1. Its pathway is isoprenoid biosynthesis; isopentenyl diphosphate biosynthesis via DXP pathway; isopentenyl diphosphate from 1-deoxy-D-xylulose 5-phosphate: step 6/6. Catalyzes the conversion of 1-hydroxy-2-methyl-2-(E)-butenyl 4-diphosphate (HMBPP) into a mixture of isopentenyl diphosphate (IPP) and dimethylallyl diphosphate (DMAPP). Acts in the terminal step of the DOXP/MEP pathway for isoprenoid precursor biosynthesis. This chain is 4-hydroxy-3-methylbut-2-enyl diphosphate reductase, found in Kosmotoga olearia (strain ATCC BAA-1733 / DSM 21960 / TBF 19.5.1).